The primary structure comprises 418 residues: Glutamyl-tRNA reductase (418 aa).

Substrate is bound by residues 49–52, S107, 112–114, and Q118; these read TCNR and EPQ. C50 (nucleophile) is an active-site residue. 187 to 192 lines the NADP(+) pocket; that stretch reads GAGETI.

Belongs to the glutamyl-tRNA reductase family. Homodimer.

It carries out the reaction (S)-4-amino-5-oxopentanoate + tRNA(Glu) + NADP(+) = L-glutamyl-tRNA(Glu) + NADPH + H(+). It participates in porphyrin-containing compound metabolism; protoporphyrin-IX biosynthesis; 5-aminolevulinate from L-glutamyl-tRNA(Glu): step 1/2. Functionally, catalyzes the NADPH-dependent reduction of glutamyl-tRNA(Glu) to glutamate 1-semialdehyde (GSA). The polypeptide is Glutamyl-tRNA reductase (Aeromonas salmonicida (strain A449)).